Consider the following 195-residue polypeptide: 3-isopropylmalate dehydratase small subunit (195 aa).

It belongs to the LeuD family. LeuD type 1 subfamily. As to quaternary structure, heterodimer of LeuC and LeuD.

It carries out the reaction (2R,3S)-3-isopropylmalate = (2S)-2-isopropylmalate. It participates in amino-acid biosynthesis; L-leucine biosynthesis; L-leucine from 3-methyl-2-oxobutanoate: step 2/4. Catalyzes the isomerization between 2-isopropylmalate and 3-isopropylmalate, via the formation of 2-isopropylmaleate. This Rubrobacter xylanophilus (strain DSM 9941 / JCM 11954 / NBRC 16129 / PRD-1) protein is 3-isopropylmalate dehydratase small subunit.